The primary structure comprises 188 residues: V-type ATP synthase subunit E (188 aa).

This sequence belongs to the V-ATPase E subunit family.

Functionally, produces ATP from ADP in the presence of a proton gradient across the membrane. The polypeptide is V-type ATP synthase subunit E (Thermus thermophilus (strain ATCC BAA-163 / DSM 7039 / HB27)).